Here is a 337-residue protein sequence, read N- to C-terminus: Adenine deaminase (337 aa).

Zn(2+) contacts are provided by His-17, His-19, and His-197. Catalysis depends on Glu-200, which acts as the Proton donor. Zn(2+) is bound at residue Asp-278. Asp-279 lines the substrate pocket.

The protein belongs to the metallo-dependent hydrolases superfamily. Adenosine and AMP deaminases family. Adenine deaminase type 2 subfamily. Requires Zn(2+) as cofactor.

It catalyses the reaction adenine + H2O + H(+) = hypoxanthine + NH4(+). Functionally, catalyzes the hydrolytic deamination of adenine to hypoxanthine. Plays an important role in the purine salvage pathway and in nitrogen catabolism. The chain is Adenine deaminase from Zymomonas mobilis subsp. mobilis (strain ATCC 31821 / ZM4 / CP4).